Reading from the N-terminus, the 421-residue chain is 4-methylaminobutanoate oxidase (methylamine-forming) (421 aa).

Positions 31, 33, 39, and 379 each coordinate FAD.

The protein belongs to the flavin monoamine oxidase family. As to quaternary structure, monomer. The cofactor is FAD.

It carries out the reaction 4-(methylamino)butanoate + O2 + H2O = succinate semialdehyde + methylamine + H2O2. Its pathway is alkaloid degradation; nicotine degradation. Catalyzes the removal of methylamine from 4-methylaminobutanoate with the formation of succinate semialdehyde. Is involved in the catabolism of 4-methylaminobutanoate produced from nicotine. Has a very weak monoamine oxidase activity with 4-aminobutanoate. Cannot use spermidine, spermine, sarcosine, dimethylglycine, glycine, choline, betaine, alpha-methylamino isobutyrate, methylamine propionitrile and methylamino propylamine as substrate. The protein is 4-methylaminobutanoate oxidase (methylamine-forming) (mao) of Paenarthrobacter nicotinovorans (Arthrobacter nicotinovorans).